The primary structure comprises 161 residues: Chaperone protein dnaJ 11, chloroplastic (161 aa).

Residues 1–18 are compositionally biased toward low complexity; sequence MLSSSPTSFTHPFLSSSP. The disordered stretch occupies residues 1-31; the sequence is MLSSSPTSFTHPFLSSSPPLSPISPPSRTAR. The N-terminal 36 residues, 1–36, are a transit peptide targeting the chloroplast; the sequence is MLSSSPTSFTHPFLSSSPPLSPISPPSRTARISPPL. A J domain is found at 65–133; sequence SLYDVLEVPL…EKRSVYDRRM (69 aa).

It belongs to the DnaJ family. C/III subfamily. As to expression, expressed in roots, stems, leaves, flowers and developing siliques.

It is found in the plastid. The protein resides in the chloroplast stroma. Functionally, plays a continuous role in plant development probably in the structural organization of compartments. The polypeptide is Chaperone protein dnaJ 11, chloroplastic (ATJ11) (Arabidopsis thaliana (Mouse-ear cress)).